Reading from the N-terminus, the 500-residue chain is Pentatricopeptide repeat-containing protein At1g06580 (500 aa).

PPR repeat units follow at residues 78 to 112, 113 to 147, 148 to 182, 183 to 217, 218 to 252, 253 to 287, 288 to 322, 323 to 357, 358 to 392, 393 to 427, 428 to 462, and 463 to 498; these read SIVD…GISH, DLYS…GFEP, SIVT…GYEP, NVVI…GIRP, DVVT…GISP, DVIT…SVNP, NIVT…GFFP, NAVT…GVDG, DTFT…GVHP, DMYT…KTVV, GIIT…GVSP, and DVIT…GLMP.

It belongs to the PPR family. P subfamily.

This Arabidopsis thaliana (Mouse-ear cress) protein is Pentatricopeptide repeat-containing protein At1g06580.